Here is a 424-residue protein sequence, read N- to C-terminus: GTPase Obg (424 aa).

The region spanning Met-1–Leu-158 is the Obg domain. Residues Ser-21–Gly-42 form a disordered region. Gly residues predominate over residues Gly-32–Gly-42. The OBG-type G domain maps to Ala-159–Thr-331. Residues Gly-165–Ser-172, Phe-190–Ser-194, Asp-212–Gly-215, Asn-282–Asp-285, and Ser-312–Ala-314 contribute to the GTP site. 2 residues coordinate Mg(2+): Ser-172 and Thr-192. The 80-residue stretch at Lys-345–Leu-424 folds into the OCT domain.

The protein belongs to the TRAFAC class OBG-HflX-like GTPase superfamily. OBG GTPase family. In terms of assembly, monomer. Mg(2+) serves as cofactor.

Its subcellular location is the cytoplasm. Functionally, an essential GTPase which binds GTP, GDP and possibly (p)ppGpp with moderate affinity, with high nucleotide exchange rates and a fairly low GTP hydrolysis rate. Plays a role in control of the cell cycle, stress response, ribosome biogenesis and in those bacteria that undergo differentiation, in morphogenesis control. The sequence is that of GTPase Obg from Clostridium kluyveri (strain NBRC 12016).